Consider the following 356-residue polypeptide: Arginine kinase Lit v 2 (356 aa).

In terms of domain architecture, Phosphagen kinase N-terminal spans 9–91; the sequence is KLEAGFKKLE…FDPIIEDYHV (83 aa). Position 64-68 (64-68) interacts with L-arginine; sequence GVGIY. The region spanning 119–356 is the Phosphagen kinase C-terminal domain; sequence FVISTRVRCG…LELIKMEKEM (238 aa). ATP is bound by residues 122–126 and His185; that span reads STRVR. An L-arginine-binding site is contributed by Glu225. ATP is bound at residue Arg229. Residue Cys271 coordinates L-arginine. ATP-binding positions include 280-284 and 309-314; these read RASVH and RGTRGE. Position 314 (Glu314) interacts with L-arginine.

This sequence belongs to the ATP:guanido phosphotransferase family. As to expression, expressed in muscle (at protein level). Expressed in muscle, heart, nerve, stomach and hemocytes, with the highest expression in muscle. Very low expression in eyestalk and intestine. Not expressed in hepatopancreas, gill and skin.

The enzyme catalyses L-arginine + ATP = N(omega)-phospho-L-arginine + ADP + H(+). No change in activity after supplementation with 10 mM glucose. However, activity decreases significantly when glucose concentration is higher than 50 mM and almost all activity is lost with 200 mM glucose. Activity is significantly increased after treatment with 10 mM and 50 mM ATP. However, activity drops significantly with 200 mM ATP. Inhibited by 10-200 mM alpha-ketoglutarate. No change in activity after incubation with 10-200 mM L-citrulline, L-ornaline or glycerol. Catalyzes the reversible transfer of high energy ATP gamma-phosphate group to L-arginine. This Penaeus vannamei (Whiteleg shrimp) protein is Arginine kinase Lit v 2.